The chain runs to 199 residues: UPF0301 protein Anae109_0457 (199 aa).

Belongs to the UPF0301 (AlgH) family.

In Anaeromyxobacter sp. (strain Fw109-5), this protein is UPF0301 protein Anae109_0457.